The chain runs to 98 residues: Protein S100-A13 (98 aa).

One can recognise an EF-hand domain in the interval 18–53 (STFFTFAGREGRKGSLNINEFKELATQQLPHLLKDV). Ca(2+) contacts are provided by Ser32, Glu37, Asp64, Asn66, Asp68, Glu70, and Glu75. Ser32 is subject to Phosphoserine.

The protein belongs to the S-100 family. In terms of assembly, homodimer. Part of a copper-dependent multiprotein complex containing S100A13, FGF1 and SYT1. Interacts with FGF1 and SYT1. Interacts with IL1A.

The protein localises to the cytoplasm. It is found in the secreted. In terms of biological role, plays a role in the export of proteins that lack a signal peptide and are secreted by an alternative pathway. Binds two calcium ions per subunit. Binds one copper ion. Binding of one copper ion does not interfere with calcium binding. Required for the copper-dependent stress-induced export of IL1A and FGF1. The calcium-free protein binds to lipid vesicles containing phosphatidylserine, but not to vesicles containing phosphatidylcholine. This Mus musculus (Mouse) protein is Protein S100-A13 (S100a13).